The following is a 329-amino-acid chain: Mitochondrial nuclease (329 aa).

The active-site Proton acceptor is H138. N170 lines the Mg(2+) pocket.

The protein belongs to the DNA/RNA non-specific endonuclease family. As to quaternary structure, homodimer. The cofactor is Mn(2+). Requires Mg(2+) as cofactor.

Its subcellular location is the mitochondrion inner membrane. Its function is as follows. This enzyme has both RNase and DNase activity. The sequence is that of Mitochondrial nuclease (NUC1) from Saccharomyces cerevisiae (strain ATCC 204508 / S288c) (Baker's yeast).